Here is a 73-residue protein sequence, read N- to C-terminus: Conotoxin reg3a (73 aa).

The signal sequence occupies residues 1-20; the sequence is MMSKLRVLLTICLLLFPLSA. A propeptide spanning residues 21–55 is cleaved from the precursor; that stretch reads LPLDGDQPADQPAKRMWNGKLAARKPRFDKYDLVR. A 4-hydroxyproline mark is found at proline 59, proline 60, proline 65, and proline 70. Cysteine 72 is subject to Cysteine amide.

Post-translationally, contains 3 disulfide bonds. Expressed by the venom duct.

Its subcellular location is the secreted. The sequence is that of Conotoxin reg3a from Conus regius (Crown cone).